We begin with the raw amino-acid sequence, 227 residues long: Cytochrome c oxidase subunit 2 (227 aa).

Residues 1-14 lie on the Mitochondrial intermembrane side of the membrane; sequence MAYPLQLGLQDATS. A helical transmembrane segment spans residues 15-45; sequence PIMEELTSFHDHTLMIVFLISSLVLYIISSM. At 46–59 the chain is on the mitochondrial matrix side; sequence LTTKMTHTNTMDAQ. The helical transmembrane segment at 60–87 threads the bilayer; it reads GVETIWTILPAAILVLIALPSLRILYMM. Residues 88 to 227 lie on the Mitochondrial intermembrane side of the membrane; that stretch reads DEINNPALTV…HFENWSASMI (140 aa). 6 residues coordinate Cu cation: histidine 161, cysteine 196, glutamate 198, cysteine 200, histidine 204, and methionine 207. Residue glutamate 198 participates in Mg(2+) binding.

This sequence belongs to the cytochrome c oxidase subunit 2 family. In terms of assembly, component of the cytochrome c oxidase (complex IV, CIV), a multisubunit enzyme composed of 14 subunits. The complex is composed of a catalytic core of 3 subunits MT-CO1, MT-CO2 and MT-CO3, encoded in the mitochondrial DNA, and 11 supernumerary subunits COX4I, COX5A, COX5B, COX6A, COX6B, COX6C, COX7A, COX7B, COX7C, COX8 and NDUFA4, which are encoded in the nuclear genome. The complex exists as a monomer or a dimer and forms supercomplexes (SCs) in the inner mitochondrial membrane with NADH-ubiquinone oxidoreductase (complex I, CI) and ubiquinol-cytochrome c oxidoreductase (cytochrome b-c1 complex, complex III, CIII), resulting in different assemblies (supercomplex SCI(1)III(2)IV(1) and megacomplex MCI(2)III(2)IV(2)). Found in a complex with TMEM177, COA6, COX18, COX20, SCO1 and SCO2. Interacts with TMEM177 in a COX20-dependent manner. Interacts with COX20. Interacts with COX16. Requires Cu cation as cofactor.

It is found in the mitochondrion inner membrane. It catalyses the reaction 4 Fe(II)-[cytochrome c] + O2 + 8 H(+)(in) = 4 Fe(III)-[cytochrome c] + 2 H2O + 4 H(+)(out). Functionally, component of the cytochrome c oxidase, the last enzyme in the mitochondrial electron transport chain which drives oxidative phosphorylation. The respiratory chain contains 3 multisubunit complexes succinate dehydrogenase (complex II, CII), ubiquinol-cytochrome c oxidoreductase (cytochrome b-c1 complex, complex III, CIII) and cytochrome c oxidase (complex IV, CIV), that cooperate to transfer electrons derived from NADH and succinate to molecular oxygen, creating an electrochemical gradient over the inner membrane that drives transmembrane transport and the ATP synthase. Cytochrome c oxidase is the component of the respiratory chain that catalyzes the reduction of oxygen to water. Electrons originating from reduced cytochrome c in the intermembrane space (IMS) are transferred via the dinuclear copper A center (CU(A)) of subunit 2 and heme A of subunit 1 to the active site in subunit 1, a binuclear center (BNC) formed by heme A3 and copper B (CU(B)). The BNC reduces molecular oxygen to 2 water molecules using 4 electrons from cytochrome c in the IMS and 4 protons from the mitochondrial matrix. This is Cytochrome c oxidase subunit 2 (MT-CO2) from Acomys ignitus (Fiery spiny mouse).